Consider the following 395-residue polypeptide: uncharacterized protein (395 aa).

A coiled-coil region spans residues 288–318; it reads VAKGKEIDNAEIEKTIKEYENIEEGIEDIVK.

This is an uncharacterized protein from Ostreid herpesvirus 1 (isolate France) (OsHV-1).